A 187-amino-acid polypeptide reads, in one-letter code: MIIIVTGTPGVGKTIASKKLSEALNLNYLSLSQFVIENKLYTEYDELRQSYIIDEDKVKEELEKIISTSHLVIETIYPSLVSTADLVVVLRKNPFSLYNELKGRGWADIKVAENVEAEILGVISQEAREAFKDKVCEVDTTEMSTEQILNKILNKQCDGPIEWLVDTKVQRFLEELDKIISSYENDI.

Residues Gly10, Gly12, Lys13, Thr14, and Ile15 each coordinate ATP. The NMP stretch occupies residues 30–53 (SLSQFVIENKLYTEYDELRQSYII). The tract at residues 103–113 (GRGWADIKVAE) is LID. ATP is bound at residue Arg104.

It belongs to the adenylate kinase family. AK6 subfamily. In terms of assembly, interacts with uS11. Not a structural component of 40S pre-ribosomes, but transiently interacts with them by binding to uS11.

The enzyme catalyses AMP + ATP = 2 ADP. It carries out the reaction ATP + H2O = ADP + phosphate + H(+). Functionally, broad-specificity nucleoside monophosphate (NMP) kinase that catalyzes the reversible transfer of the terminal phosphate group between nucleoside triphosphates and monophosphates. Also has ATPase activity. Involved in the late maturation steps of the 30S ribosomal particles, specifically 16S rRNA maturation. While NMP activity is not required for ribosome maturation, ATPase activity is. Associates transiently with small ribosomal subunit protein uS11. ATP hydrolysis breaks the interaction with uS11. May temporarily remove uS11 from the ribosome to enable a conformational change of the ribosomal RNA that is needed for the final maturation step of the small ribosomal subunit. This is Putative adenylate kinase from Saccharolobus islandicus (strain L.S.2.15 / Lassen #1) (Sulfolobus islandicus).